We begin with the raw amino-acid sequence, 143 residues long: Large ribosomal subunit protein uL11 (143 aa).

This sequence belongs to the universal ribosomal protein uL11 family. Part of the ribosomal stalk of the 50S ribosomal subunit. Interacts with L10 and the large rRNA to form the base of the stalk. L10 forms an elongated spine to which L12 dimers bind in a sequential fashion forming a multimeric L10(L12)X complex. Post-translationally, one or more lysine residues are methylated.

Functionally, forms part of the ribosomal stalk which helps the ribosome interact with GTP-bound translation factors. This chain is Large ribosomal subunit protein uL11, found in Acidovorax ebreus (strain TPSY) (Diaphorobacter sp. (strain TPSY)).